The chain runs to 2531 residues: Talin (2531 aa).

One can recognise an FERM domain in the interval 87–401; it reads RPLRVRMMDE…GYIDIILKKK (315 aa). Residues 598–621 form an interaction with VIN1 region; it reads GEKLLEAARGLAGAVRHLLKSAEP. In terms of domain architecture, I/LWEQ spans 2287–2526; it reads TDWVDPSDPN…KIRHDKYKRH (240 aa). The disordered stretch occupies residues 2466–2485; that stretch reads AAKRSSEEGDDEEVSGGGQE.

Interacts with VIN1 (vinculin); the interaction facilitates VIN1 binding to F-actin.

Its subcellular location is the cytoplasm. It localises to the cytoskeleton. The protein localises to the cell cortex. Its function is as follows. Probably involved in connections of major cytoskeletal structures to the plasma membrane. This Oscarella pearsei (Sponge) protein is Talin.